A 95-amino-acid polypeptide reads, in one-letter code: Co-chaperonin GroES (95 aa).

It belongs to the GroES chaperonin family. Heptamer of 7 subunits arranged in a ring. Interacts with the chaperonin GroEL.

The protein resides in the cytoplasm. Together with the chaperonin GroEL, plays an essential role in assisting protein folding. The GroEL-GroES system forms a nano-cage that allows encapsulation of the non-native substrate proteins and provides a physical environment optimized to promote and accelerate protein folding. GroES binds to the apical surface of the GroEL ring, thereby capping the opening of the GroEL channel. This is Co-chaperonin GroES from Geobacter sulfurreducens (strain ATCC 51573 / DSM 12127 / PCA).